The primary structure comprises 174 residues: ATP-dependent protease subunit HslV (174 aa).

T2 is a catalytic residue. Na(+) contacts are provided by G157, C160, and T163.

The protein belongs to the peptidase T1B family. HslV subfamily. A double ring-shaped homohexamer of HslV is capped on each side by a ring-shaped HslU homohexamer. The assembly of the HslU/HslV complex is dependent on binding of ATP.

The protein localises to the cytoplasm. It catalyses the reaction ATP-dependent cleavage of peptide bonds with broad specificity.. With respect to regulation, allosterically activated by HslU binding. Its function is as follows. Protease subunit of a proteasome-like degradation complex believed to be a general protein degrading machinery. The polypeptide is ATP-dependent protease subunit HslV (Shewanella frigidimarina (strain NCIMB 400)).